The following is a 426-amino-acid chain: PI-PLC X domain-containing protein At5g67130 (426 aa).

An N-terminal signal peptide occupies residues 1 to 28 (MSACINGLCRAVTVSLLLLLLSFSFSSA). One can recognise a PI-PLC X-box domain in the interval 76–232 (IINGLPFNKY…MVQENHRLLV (157 aa)). N-linked (GlcNAc...) asparagine glycans are attached at residues Asn151 and Asn255. Residues 258-277 (GDPGVKRGSCPNRKESQPLN) form a disordered region. The N-linked (GlcNAc...) asparagine glycan is linked to Asn370. Ser404 carries the GPI-anchor amidated serine lipid modification. A propeptide spans 405–426 (VAQLNNIVVFCFSLLPLLIFLL) (removed in mature form).

The protein resides in the cell membrane. The protein is PI-PLC X domain-containing protein At5g67130 of Arabidopsis thaliana (Mouse-ear cress).